A 191-amino-acid polypeptide reads, in one-letter code: UPF0312 protein Sbal_3041 (191 aa).

Residues 1–22 (MKKQLLSALIGASLLAPMAASA) form the signal peptide.

The protein belongs to the UPF0312 family. Type 1 subfamily.

The protein localises to the periplasm. This Shewanella baltica (strain OS155 / ATCC BAA-1091) protein is UPF0312 protein Sbal_3041.